The primary structure comprises 885 residues: Glycerol-3-phosphate acyltransferase (885 aa).

Pro residues predominate over residues 1–17; the sequence is MPEQNPLPFPDGQPSPP. Positions 1–26 are disordered; sequence MPEQNPLPFPDGQPSPPSTAAADTGA. The HXXXXD motif motif lies at 362 to 367; that stretch reads HRSHMD.

Belongs to the GPAT/DAPAT family.

The protein resides in the cell inner membrane. It catalyses the reaction sn-glycerol 3-phosphate + an acyl-CoA = a 1-acyl-sn-glycero-3-phosphate + CoA. It participates in phospholipid metabolism; CDP-diacylglycerol biosynthesis; CDP-diacylglycerol from sn-glycerol 3-phosphate: step 1/3. In Xanthomonas axonopodis pv. citri (strain 306), this protein is Glycerol-3-phosphate acyltransferase.